Here is an 888-residue protein sequence, read N- to C-terminus: Bifunctional uridylyltransferase/uridylyl-removing enzyme (888 aa).

The uridylyltransferase stretch occupies residues 1–348; sequence MATTTDKQVS…YHFAEDKIEP (348 aa). The interval 349 to 709 is uridylyl-removing; that stretch reads INPRFRIINN…LQPTTSRGAT (361 aa). The region spanning 468–590 is the HD domain; sequence VDEHTILVIR…VGTQQRLDYL (123 aa). ACT domains lie at 710-787 and 817-888; these read ELII…DDTM and ELSI…NIEQ.

Belongs to the GlnD family. Mg(2+) serves as cofactor.

It carries out the reaction [protein-PII]-L-tyrosine + UTP = [protein-PII]-uridylyl-L-tyrosine + diphosphate. The catalysed reaction is [protein-PII]-uridylyl-L-tyrosine + H2O = [protein-PII]-L-tyrosine + UMP + H(+). Uridylyltransferase (UTase) activity is inhibited by glutamine, while glutamine activates uridylyl-removing (UR) activity. Modifies, by uridylylation and deuridylylation, the PII regulatory proteins (GlnB and homologs), in response to the nitrogen status of the cell that GlnD senses through the glutamine level. Under low glutamine levels, catalyzes the conversion of the PII proteins and UTP to PII-UMP and PPi, while under higher glutamine levels, GlnD hydrolyzes PII-UMP to PII and UMP (deuridylylation). Thus, controls uridylylation state and activity of the PII proteins, and plays an important role in the regulation of nitrogen assimilation and metabolism. In Hydrogenovibrio crunogenus (strain DSM 25203 / XCL-2) (Thiomicrospira crunogena), this protein is Bifunctional uridylyltransferase/uridylyl-removing enzyme.